The sequence spans 255 residues: 5'-nucleotidase SurE (255 aa).

Residues aspartate 8, aspartate 9, serine 40, and asparagine 93 each contribute to the a divalent metal cation site.

The protein belongs to the SurE nucleotidase family. A divalent metal cation serves as cofactor.

The protein resides in the cytoplasm. The enzyme catalyses a ribonucleoside 5'-phosphate + H2O = a ribonucleoside + phosphate. In terms of biological role, nucleotidase that shows phosphatase activity on nucleoside 5'-monophosphates. The chain is 5'-nucleotidase SurE from Rhodopseudomonas palustris (strain ATCC BAA-98 / CGA009).